The chain runs to 555 residues: DNA-directed primase/polymerase protein (555 aa).

The stretch at 1–22 forms a coiled coil; sequence MKRKWEATLKQIEERASHYERK. Residues Arg76, 114–116, and 165–169 each bind substrate; these read DLE and KFSRH. Residues Asp114 and Glu116 each coordinate Mn(2+). The disordered stretch occupies residues 210–230; sequence ETTGHEFTHFSETPSEQGTCF. Residues 219 to 230 show a composition bias toward polar residues; the sequence is FSETPSEQGTCF. A Phosphoserine modification is found at Ser255. Substrate-binding positions include 288–291 and Lys297; that span reads RNFR. Zn(2+) is bound by residues Cys418, His425, Cys445, and Cys450. Residues 418-451 carry the Zinc knuckle motif motif; that stretch reads CENIGRAHRSNNIMILVDLKNEVWYQKCHDPVCK. The segment at 480-503 is disordered; the sequence is TDTTADTETKSPHGPSSSVLSKGA. The tract at residues 480–555 is interaction with RPA1; it reads TDTTADTETK…DELLIEVLQE (76 aa). 2 short sequence motifs (RPA1-binding motif) span residues 509–523 and 543–551; these read WDNG…EATE and EIPDELLIE.

The protein belongs to the eukaryotic-type primase small subunit family. Interacts with RPA1; leading to recruitment to chromatin and stimulate DNA primase activity. Interacts with SSBP1. Interacts with POLDIP2; leading to enhance DNA polymerase activity. Mn(2+) is required as a cofactor.

The protein resides in the nucleus. The protein localises to the mitochondrion matrix. Its subcellular location is the chromosome. The enzyme catalyses ssDNA + n NTP = ssDNA/pppN(pN)n-1 hybrid + (n-1) diphosphate.. It catalyses the reaction DNA(n) + a 2'-deoxyribonucleoside 5'-triphosphate = DNA(n+1) + diphosphate. Its function is as follows. DNA primase and DNA polymerase required to tolerate replication-stalling lesions by bypassing them. Required to facilitate mitochondrial and nuclear replication fork progression by initiating de novo DNA synthesis using dNTPs and acting as an error-prone DNA polymerase able to bypass certain DNA lesions. Shows a high capacity to tolerate DNA damage lesions such as 8oxoG and abasic sites in DNA. Provides different translesion synthesis alternatives when DNA replication is stalled: able to synthesize DNA primers downstream of lesions, such as ultraviolet (UV) lesions, R-loops and G-quadruplexes, to allow DNA replication to continue. Can also realign primers ahead of 'unreadable lesions' such as abasic sites and 6-4 photoproduct (6-4 pyrimidine-pyrimidinone), thereby skipping the lesion. Repriming avoids fork degradation while leading to accumulation of internal ssDNA gaps behind the forks. Also able to incorporate nucleotides opposite DNA lesions such as 8oxoG, like a regular translesion synthesis DNA polymerase. Also required for reinitiating stalled forks after UV damage during nuclear DNA replication. Required for mitochondrial DNA (mtDNA) synthesis and replication, by reinitiating synthesis after UV damage or in the presence of chain-terminating nucleotides. Prevents APOBEC family-mediated DNA mutagenesis by repriming downstream of abasic site to prohibit error-prone translesion synthesis. Has non-overlapping function with POLH. In addition to its role in DNA damage response, also required to maintain efficient nuclear and mitochondrial DNA replication in unperturbed cells. The polypeptide is DNA-directed primase/polymerase protein (Bos taurus (Bovine)).